Consider the following 648-residue polypeptide: MMLEPSPPPLTTTVTPSLPSSLKKSVTDNDQNNNNVPRKRKLACQNCRRRRRKCNMEKPCSNCIKFRTECVFTQQDLRNKRYSTTYVEALQSQIRSLKEQLQILSSSSSTIASNALSSLKNNSDHGDAPNEKILKYGETAQSALPSSESNDENESDAFTKKMPSESPPPVGTNSIYPSNSLSIIKKKTDGSTRYQQQQVSLKNLSRSPLILRSLSLFFKWLYPGHYLFIHRETFLSAFFGDTNTKSYYCSEELVFAIAALGSLISYKSETELFQQSEVFYQRAKTIVLKKIFQLEDSSLAESSSSSKLAIIQTLLCLAFYDIGSGENPMAWYLSGLAFRIAHEIGLHLNPEAWSNVYEDELSIMDFEVRSRIYWGCYIADHLIAILFGRSTSLRLSNSTVPETDELPEIETGIEEYIYDPKVILSTANPLKKLIVLSRITEIFASKIFSPNETLLQRSEYLAKFNLEVYNWRRDLPPELQWTKRSLMEMTDFNPTIAYVWFHYYIVLISYNKPFIYEIKQSRELVEGYVDELYYLLKVWKNKFKTFEKATIYMIYSAILAIQCMKSNLIKKDRKQDFLNFLSAPTLNYELARKFIENSEDALHNSETMDLLGTLSHGNDFALEYNFDFTLLNEIDMLIGGNTNDGLSK.

Residues 1-10 show a composition bias toward pro residues; it reads MMLEPSPPPL. The interval 1–37 is disordered; that stretch reads MMLEPSPPPLTTTVTPSLPSSLKKSVTDNDQNNNNVP. The segment covering 11–22 has biased composition (low complexity); the sequence is TTTVTPSLPSSL. A DNA-binding region (zn(2)-C6 fungal-type) is located at residues 44-70; sequence CQNCRRRRRKCNMEKPCSNCIKFRTEC. A disordered region spans residues 140–177; that stretch reads AQSALPSSESNDENESDAFTKKMPSESPPPVGTNSIYP. Phosphoserine occurs at positions 164 and 166.

It localises to the nucleus. Functionally, activates the CHA1 gene for L-serine dehydratase. Binds to the DNA sequence 5'-GVGGARAYRTRATTCCRC-3'. In Saccharomyces cerevisiae (strain ATCC 204508 / S288c) (Baker's yeast), this protein is Activatory protein CHA4 (CHA4).